A 274-amino-acid chain; its full sequence is Putative bidirectional sugar transporter SWEET7d (274 aa).

The Extracellular segment spans residues 1–8; that stretch reads MVPDLIRN. The chain crosses the membrane as a helical span at residues 9–29; it reads VVGIVGNVISFGLFLSPVPTF. The region spanning 9-96 is the MtN3/slv 1 domain; that stretch reads VVGIVGNVIS…TIFFLFSDKK (88 aa). Topologically, residues 30–45 are cytoplasmic; sequence WRIIKNKDVRDFKADQ. A helical membrane pass occupies residues 46 to 66; the sequence is YLATLLNCMLWVFYGLPIVHP. The Extracellular portion of the chain corresponds to 67-68; sequence NS. The helical transmembrane segment at 69–89 threads the bilayer; that stretch reads ILVVTINGIGLVIEAVYLTIF. The Cytoplasmic segment spans residues 90 to 100; sequence FLFSDKKNKKK. The helical transmembrane segment at 101-121 threads the bilayer; that stretch reads MGVVLATEALFMAAVALGVLL. The Extracellular segment spans residues 122–130; sequence DAHTHQRRS. The helical transmembrane segment at 131 to 151 threads the bilayer; sequence LIVGILCVIFGTIMYSSPLTI. In terms of domain architecture, MtN3/slv 2 spans 132–214; it reads IVGILCVIFG…QLILYAIYYR (83 aa). Residues 152–164 lie on the Cytoplasmic side of the membrane; it reads MSQVVKTKSVEYM. The helical transmembrane segment at 165–185 threads the bilayer; that stretch reads PLLLSVVSFLNGLCWTSYALI. Over 186–188 the chain is Extracellular; the sequence is RFD. The chain crosses the membrane as a helical span at residues 189–209; it reads IFITIPNGLGVLFALMQLILY. At 210–274 the chain is on the cytoplasmic side; it reads AIYYRTTPKK…SISRLSHKLA (65 aa). Positions 218–274 are disordered; the sequence is KKPSTTGPHPRSRIRTSSYQPSPPSPRAPASSPLSARTTTSMAAMSPSISRLSHKLA. Positions 245 to 258 are enriched in low complexity; sequence APASSPLSARTTTS.

Belongs to the SWEET sugar transporter family. In terms of assembly, forms homooligomers and/or heterooligomers.

It is found in the cell membrane. In terms of biological role, mediates both low-affinity uptake and efflux of sugar across the plasma membrane. This is Putative bidirectional sugar transporter SWEET7d (SWEET7D) from Oryza sativa subsp. japonica (Rice).